The chain runs to 1693 residues: MSWRDRDFDPHGGRNAFRLTDESKQSSSERAASMRAMRSFTQSIEDEGPPELPASLDIDMIEGVSMKTSDTNDTIIEVKPGKVDPQLGETQKYKMAVPGPGHSEQEQELHKSLIRDEEEDAEVEQVFAASAEPVVTPPKSLNFAETAEELRHAYDQKIRKRPTTPTSACVLDGIAFFAGSVDGSNDTIPTDAEKKIKVSIPSGRRRKTENMSYSEFYESMANQIPGGGGRRMSQSGRTTPLHDYEGDILDENPQYKDKAPPAPVVHRRSSIEWENFADMEDKMEQAEEKARKEEKKEKEETAEVAQNDDVTTEKHQNEVEKSKKMLNFLAKPPTVEITSPDAPHQGAFHDNTPKEPKVVEEEEDDDLPTFSEDMDEARQQVMKEMTESVVKTENVENEKQEDTHISEGHVEYGTEESPAVTDGSYQQDGTENAYDPNAYPGYIWNYETQEWEYDPSYVAPEEPIDQSAYEAQAAAYAEVDQRAAEVVYQREHAGYDQGDFYTHQDTSYSSEAYAHDQAKGYQDPNAYGAEAAADNSQEYDYSAYGGYEGYLAACRAYDEESQQPQYGETVATEAYSQDYGYEQQGDYHHEGVGATDENSTSAISGYEQNGASTSLGYGDAQGYDGYDHNASYYQGQEYQQEYYQNHKYENSQYQVDQHPAESAAPPRPVAPMEPLFKQAPPQPDPFGWDSSGHTGDAPTASEPVQELSPTPEASSSTGTSAPARPPPARPEAPKKDETAVDAAAPPRPPPAARPPPPRPAPANKEKPKEPEPEEDAWAQFKRMTEKVSTAVKSTESTLKNLEETSAANDIKDESYLANVGGSQGFVNESTQKEIQRLTEEKKMEKLQKKKLKQQGKKAATPTLEPDEEDAMDRAAQELAMKMASMRSDMADWKAPEMIPVKEIKKAPEIRRVDSASAIPPRKRSSIKDVQQDSGGSLELPPHLAAPQDSIAPNPKGDHAPDDPILSAPAWADFETSEPMLPPSESGFFSNKDASNEGGVSRDATDDPFVTTVASSEKRSSFVADPFAPQQAALIDESYDPFAVVAVEEVVAMAKAKAEQAAANAENEDDFYNGRQSPTLSTPTPEGGSPISQQRPNAFEDDFKCAELTGLDTPTPLYDEDDSQPLTDFIPKFDGDGWDLMVRHPIKKKSFMAERCWKPCYVRLHGLTLYLYNDKKDAQPIQELLLQATYSLSDTTLQAYDVYGKIHTVKLQFVVYKEKVGIRPGQISRLVDGHITKYGLPLEHSAQCTVLLKFGSLNASHLQTFVTTVEDLLFKCKITRTAKPVYKQDEVQIHCYDEYSAFVDKEGILSDQKARVRLFCLAFLTGSPVLEVGLNDRRRQGKEIVRRKDILPMYTERWIRFEALEFHSIVNKPEFDKEQVIAFSPPDGCFFEIMRFRVRPPRNREKAMTVKSIMKIAGSKVEIRIEAMAAAQIQRTRGSDERRNIPCEDIAIRFPIPEAWIYLFREERHWGVGSIHSKKLRPGKVKNLKDRLLGAVQASEPNLIECAIGEAKYEHVYRSLVWRIPRLPEKHHAAYKSHLLKCRFELSSFDLMPEEFLPRCDVDFTMPLATVSNTVVRSVSVEQHEDSDRVEKFVRYVAKYQYKVEIDYVQCADLDLDMADPSVNPEAAAAPVPELHQPTFNPSTQESDTQQGYRIDFNEAEMGGSNRRDDSSSDEEPDSHKMPIIQIDMKNYGY.

The segment covering 1–12 (MSWRDRDFDPHG) has biased composition (basic and acidic residues). Disordered stretches follow at residues 1–54 (MSWR…ELPA), 222–322 (NQIP…VEKS), 334–371 (TVEITSPDAPHQGAFHDNTPKEPKVVEEEEDDDLPTFS), 383–438 (KEMT…DPNA), 585–807 (GDYH…TSAA), 841–869 (KKMEKLQKKKLKQQGKKAATPTLEPDEED), and 899–1024 (PVKE…FVAD). Over residues 26 to 39 (SSSERAASMRAMRS) the composition is skewed to low complexity. 2 stretches are compositionally biased toward basic and acidic residues: residues 279 to 301 (MEDKMEQAEEKARKEEKKEKEET) and 311 to 322 (TTEKHQNEVEKS). The span at 360 to 371 (EEEEDDDLPTFS) shows a compositional bias: acidic residues. Basic and acidic residues predominate over residues 393–412 (ENVENEKQEDTHISEGHVEY). Over residues 596 to 615 (DENSTSAISGYEQNGASTSL) the composition is skewed to polar residues. Low complexity predominate over residues 632 to 643 (YYQGQEYQQEYY). Positions 684–686 (DPF) match the DPF 1 motif. Residues 708–722 (SPTPEASSSTGTSAP) show a composition bias toward low complexity. The segment covering 745-760 (PPRPPPAARPPPPRPA) has biased composition (pro residues). Over residues 786–807 (KVSTAVKSTESTLKNLEETSAA) the composition is skewed to polar residues. The span at 899-913 (PVKEIKKAPEIRRVD) shows a compositional bias: basic and acidic residues. 3 short sequence motifs (DPF) span residues 1006–1008 (DPF), 1024–1026 (DPF), and 1039–1041 (DPF). Residues 1062 to 1095 (ANAENEDDFYNGRQSPTLSTPTPEGGSPISQQRP) form a disordered region. Polar residues predominate over residues 1073-1095 (GRQSPTLSTPTPEGGSPISQQRP). The 148-residue stretch at 1136–1283 (GWDLMVRHPI…KCKITRTAKP (148 aa)) folds into the SHD domain. The region spanning 1287 to 1606 (QDEVQIHCYD…AKYQYKVEID (320 aa)) is the MHD domain. Residues 1633 to 1693 (ELHQPTFNPS…IQIDMKNYGY (61 aa)) are disordered. Over residues 1637 to 1651 (PTFNPSTQESDTQQG) the composition is skewed to polar residues.

This sequence belongs to the Stoned B family.

It localises to the cytoplasm. Its function is as follows. Potential adapter protein, which may be involved in endocytic vesicle recycling of synaptic vesicles. The chain is Putative stoned B-like protein (unc-41) from Caenorhabditis elegans.